A 31-amino-acid chain; its full sequence is Diuretic hormone class 2 (31 aa).

Pro31 carries the post-translational modification Proline amide.

It belongs to the diuretic hormone class 2 family.

It is found in the secreted. Regulation of fluid secretion. Stimulates primary urine secretion by Malpighian tubules and causes a dose-dependent stimulation of cAMP levels in the tubules. Has a nonselective effect on Na(+)/K(+) ion transport. In vitro, primarily elevates intracellular Ca(2+). The polypeptide is Diuretic hormone class 2 (Apis mellifera (Honeybee)).